The following is a 296-amino-acid chain: Bifunctional protein FolD 1/3 (296 aa).

NADP(+) contacts are provided by residues 166 to 168 (GRS), Ser191, and Ile232.

It belongs to the tetrahydrofolate dehydrogenase/cyclohydrolase family. In terms of assembly, homodimer.

It catalyses the reaction (6R)-5,10-methylene-5,6,7,8-tetrahydrofolate + NADP(+) = (6R)-5,10-methenyltetrahydrofolate + NADPH. The enzyme catalyses (6R)-5,10-methenyltetrahydrofolate + H2O = (6R)-10-formyltetrahydrofolate + H(+). It participates in one-carbon metabolism; tetrahydrofolate interconversion. In terms of biological role, catalyzes the oxidation of 5,10-methylenetetrahydrofolate to 5,10-methenyltetrahydrofolate and then the hydrolysis of 5,10-methenyltetrahydrofolate to 10-formyltetrahydrofolate. The chain is Bifunctional protein FolD 1/3 from Ruegeria pomeroyi (strain ATCC 700808 / DSM 15171 / DSS-3) (Silicibacter pomeroyi).